Reading from the N-terminus, the 575-residue chain is Serine/threonine-protein phosphatase 2A regulatory subunit B'' subunit beta (575 aa).

The interval 41–131 (APGRDQPTPG…SQSIPTFYFP (91 aa)) is disordered. The 36-residue stretch at 388 to 423 (KTPTSIEYWFRCMDLDGDGALSMFELEYFYEEQCRR) folds into the EF-hand domain. Ca(2+) contacts are provided by Asp-401, Asp-403, Asp-405, and Glu-412.

PP2A consists of a common heterodimeric core enzyme, composed of a 36 kDa catalytic subunit (subunit C) and a 65 kDa constant regulatory subunit (PR65 or subunit A), that associates with a variety of regulatory subunits. Proteins that associate with the core dimer include three families of regulatory subunits B (the R2/B/PR55/B55, R3/B''/PR72/PR130/PR59 and R5/B'/B56 families), the 48 kDa variable regulatory subunit, viral proteins, and cell signaling molecules. Interacts with N-terminal region of CDC6. Interacts with NOD2.

The protein localises to the nucleus. Functionally, the B regulatory subunit might modulate substrate selectivity and catalytic activity, and might also direct the localization of the catalytic enzyme to a particular subcellular compartment. This chain is Serine/threonine-protein phosphatase 2A regulatory subunit B'' subunit beta (PPP2R3B), found in Homo sapiens (Human).